A 106-amino-acid polypeptide reads, in one-letter code: MAHAVRSKSNWCWQTYLLERINQVFSISLPPRAQPIGPVLAGAAFQTHSQQNNSGHQFGDRFHSKGHQDTEGRILWKEASTRTTDSTETADTQLVQRQGNGGICLS.

The tract at residues 48 to 106 is disordered; it reads HSQQNNSGHQFGDRFHSKGHQDTEGRILWKEASTRTTDSTETADTQLVQRQGNGGICLS. Residues 58-80 are compositionally biased toward basic and acidic residues; the sequence is FGDRFHSKGHQDTEGRILWKEAS. Residues 81-92 show a composition bias toward low complexity; sequence TRTTDSTETADT.

Heart.

Functionally, may be involved with the regulation of GNRH gene expression. It is not known if this protein is transcribed. This chain is Putative protein SH, found in Rattus norvegicus (Rat).